A 185-amino-acid chain; its full sequence is Large ribosomal subunit protein bL25 (185 aa).

Belongs to the bacterial ribosomal protein bL25 family. CTC subfamily. As to quaternary structure, part of the 50S ribosomal subunit; part of the 5S rRNA/L5/L18/L25 subcomplex. Contacts the 5S rRNA. Binds to the 5S rRNA independently of L5 and L18.

In terms of biological role, this is one of the proteins that binds to the 5S RNA in the ribosome where it forms part of the central protuberance. The protein is Large ribosomal subunit protein bL25 of Chlamydia trachomatis serovar D (strain ATCC VR-885 / DSM 19411 / UW-3/Cx).